A 307-amino-acid chain; its full sequence is Protease HtpX homolog (307 aa).

A helical membrane pass occupies residues 16-36; the sequence is LFMGVGYLIGGAAGAMIALVV. Position 130 (His130) interacts with Zn(2+). Residue Glu131 is part of the active site. His134 serves as a coordination point for Zn(2+). The next 2 helical transmembrane spans lie at 145–165 and 172–192; these read ITAT…FFGG and GPGI…AMLV. Glu201 lines the Zn(2+) pocket. Residues 278 to 307 are disordered; sequence AGQSGSATPDPAPAPRGPWNGGAPRRGPWG.

It belongs to the peptidase M48B family. Zn(2+) is required as a cofactor.

The protein resides in the cell inner membrane. The sequence is that of Protease HtpX homolog from Nitrobacter hamburgensis (strain DSM 10229 / NCIMB 13809 / X14).